The following is a 265-amino-acid chain: Glutamate racemase (265 aa).

Residues 10-11 (DS) and 42-43 (YG) contribute to the substrate site. The active-site Proton donor/acceptor is C73. 74–75 (NT) is a substrate binding site. C184 acts as the Proton donor/acceptor in catalysis. 185–186 (TH) contacts substrate.

Belongs to the aspartate/glutamate racemases family.

It catalyses the reaction L-glutamate = D-glutamate. It participates in cell wall biogenesis; peptidoglycan biosynthesis. Provides the (R)-glutamate required for cell wall biosynthesis. The polypeptide is Glutamate racemase (Pediococcus pentosaceus (strain ATCC 25745 / CCUG 21536 / LMG 10740 / 183-1w)).